A 62-amino-acid polypeptide reads, in one-letter code: Coiled-coil domain-containing protein YLR146W-A (62 aa).

A coiled-coil region spans residues Glu-14–Glu-49.

The polypeptide is Coiled-coil domain-containing protein YLR146W-A (Saccharomyces cerevisiae (strain ATCC 204508 / S288c) (Baker's yeast)).